Here is a 96-residue protein sequence, read N- to C-terminus: uncharacterized protein (96 aa).

[3Fe-4S] cluster-binding residues include cysteine 10, cysteine 16, and cysteine 55. The segment at 67 to 96 (AGDGERASADPAPSPAEAERHAAKDQHNLG) is disordered. The segment covering 83 to 96 (EAERHAAKDQHNLG) has biased composition (basic and acidic residues).

It depends on [3Fe-4S] cluster as a cofactor.

Electron transport protein for the cytochrome systems. This is an uncharacterized protein from Bradyrhizobium diazoefficiens (strain JCM 10833 / BCRC 13528 / IAM 13628 / NBRC 14792 / USDA 110).